The chain runs to 106 residues: ATPase inhibitor, mitochondrial (106 aa).

Residues 1-25 (MAGSALAVRARFGVWGMKVLQTRGF) constitute a mitochondrion transit peptide. The tract at residues 26-52 (VSDSSDSMDTGAGSIREAGGAFGKREK) is N-terminal inhibitory region. Positions 26 to 58 (VSDSSDSMDTGAGSIREAGGAFGKREKAEEDRY) are disordered. At serine 39 the chain carries Phosphoserine. Basic and acidic residues predominate over residues 48–58 (GKREKAEEDRY). The stretch at 60 to 106 (REKTKEQLAALRKHHEDEIDHHSKEIERLQKQIERHKKKIQQLKNNH) forms a coiled coil. Residues 74–106 (HEDEIDHHSKEIERLQKQIERHKKKIQQLKNNH) form an antiparallel alpha-helical coiled coil region region. Lysine 103 carries the post-translational modification N6-succinyllysine.

It belongs to the ATPase inhibitor family. In terms of assembly, homodimer; represents the active form and is present at a pH value below 6.5. Homotetramer; represents the inactive form and is present at a pH value above 7.0.

It localises to the mitochondrion. Its function is as follows. Endogenous F(1)F(o)-ATPase inhibitor limiting ATP depletion when the mitochondrial membrane potential falls below a threshold and the F(1)F(o)-ATP synthase starts hydrolyzing ATP to pump protons out of the mitochondrial matrix. Required to avoid the consumption of cellular ATP when the F(1)F(o)-ATP synthase enzyme acts as an ATP hydrolase. Indirectly acts as a regulator of heme synthesis in erythroid tissues: regulates heme synthesis by modulating the mitochondrial pH and redox potential, allowing FECH to efficiently catalyze the incorporation of iron into protoporphyrin IX to produce heme. The sequence is that of ATPase inhibitor, mitochondrial from Mus musculus (Mouse).